A 266-amino-acid polypeptide reads, in one-letter code: 3-methyl-2-oxobutanoate hydroxymethyltransferase (266 aa).

D45 and D84 together coordinate Mg(2+). Residues 45–46, D84, and K113 contribute to the 3-methyl-2-oxobutanoate site; that span reads DS. E115 provides a ligand contact to Mg(2+). The Proton acceptor role is filled by E183.

This sequence belongs to the PanB family. Homodecamer; pentamer of dimers. The cofactor is Mg(2+).

The protein resides in the cytoplasm. It carries out the reaction 3-methyl-2-oxobutanoate + (6R)-5,10-methylene-5,6,7,8-tetrahydrofolate + H2O = 2-dehydropantoate + (6S)-5,6,7,8-tetrahydrofolate. The protein operates within cofactor biosynthesis; (R)-pantothenate biosynthesis; (R)-pantoate from 3-methyl-2-oxobutanoate: step 1/2. In terms of biological role, catalyzes the reversible reaction in which hydroxymethyl group from 5,10-methylenetetrahydrofolate is transferred onto alpha-ketoisovalerate to form ketopantoate. This is 3-methyl-2-oxobutanoate hydroxymethyltransferase from Coxiella burnetii (strain CbuG_Q212) (Coxiella burnetii (strain Q212)).